Here is a 210-residue protein sequence, read N- to C-terminus: dTTP/UTP pyrophosphatase (210 aa).

Catalysis depends on aspartate 89, which acts as the Proton acceptor.

This sequence belongs to the Maf family. YhdE subfamily. The cofactor is a divalent metal cation.

Its subcellular location is the cytoplasm. It catalyses the reaction dTTP + H2O = dTMP + diphosphate + H(+). The enzyme catalyses UTP + H2O = UMP + diphosphate + H(+). Functionally, nucleoside triphosphate pyrophosphatase that hydrolyzes dTTP and UTP. May have a dual role in cell division arrest and in preventing the incorporation of modified nucleotides into cellular nucleic acids. The chain is dTTP/UTP pyrophosphatase from Burkholderia thailandensis (strain ATCC 700388 / DSM 13276 / CCUG 48851 / CIP 106301 / E264).